We begin with the raw amino-acid sequence, 148 residues long: Large ribosomal subunit protein uL15 (148 aa).

The disordered stretch occupies residues 1 to 51 (MNLSNLKPAEGSTKTRKRIGRGPGSGLGGTSTRGHKGAKSRSGYSKKIGFE). The span at 21-31 (RGPGSGLGGTS) shows a compositional bias: gly residues.

It belongs to the universal ribosomal protein uL15 family. As to quaternary structure, part of the 50S ribosomal subunit.

In terms of biological role, binds to the 23S rRNA. This Phocaeicola vulgatus (strain ATCC 8482 / DSM 1447 / JCM 5826 / CCUG 4940 / NBRC 14291 / NCTC 11154) (Bacteroides vulgatus) protein is Large ribosomal subunit protein uL15.